We begin with the raw amino-acid sequence, 754 residues long: 5-methyltetrahydropteroyltriglutamate--homocysteine methyltransferase (754 aa).

Residues 17–20 (RELK) and Lys-117 contribute to the 5-methyltetrahydropteroyltri-L-glutamate site. L-homocysteine contacts are provided by residues 431–433 (IGS) and Glu-484. L-methionine is bound by residues 431–433 (IGS) and Glu-484. 5-methyltetrahydropteroyltri-L-glutamate contacts are provided by residues 515–516 (RC) and Trp-561. Asp-599 contributes to the L-homocysteine binding site. Asp-599 is a binding site for L-methionine. Glu-605 contacts 5-methyltetrahydropteroyltri-L-glutamate. Positions 641, 643, and 665 each coordinate Zn(2+). Catalysis depends on His-694, which acts as the Proton donor. Cys-726 lines the Zn(2+) pocket.

It belongs to the vitamin-B12 independent methionine synthase family. It depends on Zn(2+) as a cofactor.

It carries out the reaction 5-methyltetrahydropteroyltri-L-glutamate + L-homocysteine = tetrahydropteroyltri-L-glutamate + L-methionine. It participates in amino-acid biosynthesis; L-methionine biosynthesis via de novo pathway; L-methionine from L-homocysteine (MetE route): step 1/1. Its function is as follows. Catalyzes the transfer of a methyl group from 5-methyltetrahydrofolate to homocysteine resulting in methionine formation. This is 5-methyltetrahydropteroyltriglutamate--homocysteine methyltransferase from Pectobacterium atrosepticum (strain SCRI 1043 / ATCC BAA-672) (Erwinia carotovora subsp. atroseptica).